Consider the following 226-residue polypeptide: Choline transport system permease protein OpuBD (226 aa).

The ABC transmembrane type-1 domain occupies 22–202 (FGRHFLMSAY…VMAVGADLLM (181 aa)). Helical transmembrane passes span 27-47 (LMSAYGVLFAAVVGVPAGILI), 52-72 (RLSAWVFAVTNVIQTIPALAM), 73-93 (LAVLMLVMGLGANTVILSLFL), 148-168 (ALVIAIGITAIGTFVGAGGLG), and 182-202 (AIILAGAIPTAVMAVGADLLM).

Belongs to the binding-protein-dependent transport system permease family. CysTW subfamily.

It localises to the cell membrane. In terms of biological role, involved in a high affinity multicomponent binding-protein-dependent transport system for choline; probably responsible for the translocation of the substrate across the membrane. The sequence is that of Choline transport system permease protein OpuBD (opuBD) from Bacillus subtilis (strain 168).